We begin with the raw amino-acid sequence, 311 residues long: 4-hydroxyproline 2-epimerase (311 aa).

Residue cysteine 88 is the Proton acceptor of the active site. Substrate contacts are provided by residues 89 to 90 (GH), histidine 208, and aspartate 232. Cysteine 236 (proton donor) is an active-site residue. 237-238 (GT) is a binding site for substrate.

The protein belongs to the proline racemase family.

The enzyme catalyses trans-4-hydroxy-L-proline = cis-4-hydroxy-D-proline. Catalyzes the epimerization of trans-4-hydroxy-L-proline (t4LHyp) to cis-4-hydroxy-D-proline (c4DHyp). Is likely involved in a degradation pathway that converts t4LHyp to alpha-ketoglutarate. Displays no proline racemase activity. This Chromohalobacter salexigens (strain ATCC BAA-138 / DSM 3043 / CIP 106854 / NCIMB 13768 / 1H11) protein is 4-hydroxyproline 2-epimerase.